A 124-amino-acid chain; its full sequence is Small ribosomal subunit protein uS12 (124 aa).

Aspartate 89 is subject to 3-methylthioaspartic acid.

The protein belongs to the universal ribosomal protein uS12 family. In terms of assembly, part of the 30S ribosomal subunit. Contacts proteins S8 and S17. May interact with IF1 in the 30S initiation complex.

With S4 and S5 plays an important role in translational accuracy. Functionally, interacts with and stabilizes bases of the 16S rRNA that are involved in tRNA selection in the A site and with the mRNA backbone. Located at the interface of the 30S and 50S subunits, it traverses the body of the 30S subunit contacting proteins on the other side and probably holding the rRNA structure together. The combined cluster of proteins S8, S12 and S17 appears to hold together the shoulder and platform of the 30S subunit. This chain is Small ribosomal subunit protein uS12, found in Thermoanaerobacter pseudethanolicus (strain ATCC 33223 / 39E) (Clostridium thermohydrosulfuricum).